The following is a 150-amino-acid chain: 3-dehydroquinate dehydratase (150 aa).

The Proton acceptor role is filled by Y26. Positions 77, 83, and 90 each coordinate substrate. Residue H103 is the Proton donor of the active site. Substrate contacts are provided by residues 104–105 and R114; that span reads LS.

Belongs to the type-II 3-dehydroquinase family. In terms of assembly, homododecamer.

It catalyses the reaction 3-dehydroquinate = 3-dehydroshikimate + H2O. It participates in metabolic intermediate biosynthesis; chorismate biosynthesis; chorismate from D-erythrose 4-phosphate and phosphoenolpyruvate: step 3/7. Its function is as follows. Catalyzes a trans-dehydration via an enolate intermediate. The chain is 3-dehydroquinate dehydratase from Histophilus somni (strain 129Pt) (Haemophilus somnus).